We begin with the raw amino-acid sequence, 180 residues long: Calcium-binding protein E (180 aa).

4 consecutive EF-hand domains span residues 3–38, 40–76, 85–120, and 139–174; these read KVEA…NSNI, DPLA…KKIK, ALRS…DPDF, and RAKS…HPEF. Ca(2+)-binding residues include aspartate 16, aspartate 18, aspartate 20, asparagine 22, and glutamate 27. Ca(2+) is bound by residues aspartate 98, aspartate 100, aspartate 102, glutamate 109, aspartate 152, aspartate 154, asparagine 156, lysine 158, and glutamate 163.

In Dictyostelium discoideum (Social amoeba), this protein is Calcium-binding protein E (cbpE).